The primary structure comprises 224 residues: MTKTNNFLPLMLDLSGRKIVIFGGGSVGERKAKLFSGCADTLVASLEFSQALQELGTSGQVRLVQLDLLTASDSELRGLISGAFLVIPATSNFELNQKITAIARENDILINQVDTLGSVVIPSVIKRGDLVIGISTLGHSPAVSKYTRKQIEGLVTPEYSDMIRLQDELRSYLKQHVAEQRERKEILWKVLESETVWNGFSESYEKAAERAYAIISSYLVNSNR.

NAD(+)-binding positions include 26-27 (SV) and 47-50 (EFSQ).

It belongs to the precorrin-2 dehydrogenase / sirohydrochlorin ferrochelatase family. In terms of assembly, homodimer.

The catalysed reaction is precorrin-2 + NAD(+) = sirohydrochlorin + NADH + 2 H(+). The protein operates within porphyrin-containing compound metabolism; siroheme biosynthesis; sirohydrochlorin from precorrin-2: step 1/1. Functionally, involved in the archaeal biosynthesis of heme. Catalyzes the oxiation of precorrin-2 into sirohydroclorin. This Methanosarcina barkeri (strain Fusaro / DSM 804) protein is Precorrin-2 dehydrogenase.